The primary structure comprises 113 residues: MEIIMIFVSGILTAISVYLVLSKSLIRIVMGTTLLTHAANLFLITMGGLKHGTVPIYEANVKSYVDPIPQALILTAIVIAFATTAFFLVLAFRTYKELGTDNVESMKGVPEDD.

3 consecutive transmembrane segments (helical) span residues 1–21 (MEIIMIFVSGILTAISVYLVL), 28–48 (IVMGTTLLTHAANLFLITMGG), and 72–92 (LILTAIVIAFATTAFFLVLAF).

This sequence belongs to the CPA3 antiporters (TC 2.A.63) subunit C family. In terms of assembly, may form a heterooligomeric complex that consists of seven subunits: mnhA1, mnhB1, mnhC1, mnhD1, mnhE1, mnhF1 and mnhG1.

Its subcellular location is the cell membrane. In terms of biological role, mnh complex is a Na(+)/H(+) antiporter involved in Na(+) excretion. In Staphylococcus aureus (strain JH1), this protein is Na(+)/H(+) antiporter subunit C1 (mnhC1).